Reading from the N-terminus, the 95-residue chain is Protein TusB (95 aa).

This sequence belongs to the DsrH/TusB family. In terms of assembly, heterohexamer, formed by a dimer of trimers. The hexameric TusBCD complex contains 2 copies each of TusB, TusC and TusD. The TusBCD complex interacts with TusE.

It is found in the cytoplasm. Part of a sulfur-relay system required for 2-thiolation of 5-methylaminomethyl-2-thiouridine (mnm(5)s(2)U) at tRNA wobble positions. The polypeptide is Protein TusB (Escherichia coli (strain SMS-3-5 / SECEC)).